The following is a 347-amino-acid chain: NADH-quinone oxidoreductase subunit H (347 aa).

The next 8 membrane-spanning stretches (helical) occupy residues 13–33, 82–102, 115–135, 161–181, 198–218, 248–268, 283–303, and 321–341; these read LLIL…VAYI, GVFL…WAVI, VGIL…IMGG, IGFV…SDIV, FLDW…ISAL, FLLF…LATI, FTWV…FFGI, and LGWK…AAFL.

The protein belongs to the complex I subunit 1 family. As to quaternary structure, NDH-1 is composed of 14 different subunits. Subunits NuoA, H, J, K, L, M, N constitute the membrane sector of the complex.

It localises to the cell inner membrane. The enzyme catalyses a quinone + NADH + 5 H(+)(in) = a quinol + NAD(+) + 4 H(+)(out). Its function is as follows. NDH-1 shuttles electrons from NADH, via FMN and iron-sulfur (Fe-S) centers, to quinones in the respiratory chain. The immediate electron acceptor for the enzyme in this species is believed to be ubiquinone. Couples the redox reaction to proton translocation (for every two electrons transferred, four hydrogen ions are translocated across the cytoplasmic membrane), and thus conserves the redox energy in a proton gradient. This subunit may bind ubiquinone. This Mesorhizobium japonicum (strain LMG 29417 / CECT 9101 / MAFF 303099) (Mesorhizobium loti (strain MAFF 303099)) protein is NADH-quinone oxidoreductase subunit H.